The following is a 349-amino-acid chain: Phosphoribosylformylglycinamidine cyclo-ligase (349 aa).

This sequence belongs to the AIR synthase family.

Its subcellular location is the cytoplasm. It catalyses the reaction 2-formamido-N(1)-(5-O-phospho-beta-D-ribosyl)acetamidine + ATP = 5-amino-1-(5-phospho-beta-D-ribosyl)imidazole + ADP + phosphate + H(+). Its pathway is purine metabolism; IMP biosynthesis via de novo pathway; 5-amino-1-(5-phospho-D-ribosyl)imidazole from N(2)-formyl-N(1)-(5-phospho-D-ribosyl)glycinamide: step 2/2. In Bordetella avium (strain 197N), this protein is Phosphoribosylformylglycinamidine cyclo-ligase.